We begin with the raw amino-acid sequence, 992 residues long: Ankyrin repeat domain-containing protein 18A (992 aa).

5 ANK repeats span residues 67–96 (KDRT…QIDI), 100–129 (LNRT…NPNI), 133–162 (YGNT…NIEA), 166–195 (EGNT…NIHA), and 199–228 (FKRT…RISS). Residues 262–320 (NHLRNDNQETAAMKPANLKKRKERAKAEHNLKVASEEKQERLQRSENKQPQDSQSYGKK) form a disordered region. 4 coiled-coil regions span residues 278-310 (NLKK…ENKQ), 378-618 (KMIT…AERE), 683-713 (ISLL…CLEM), and 743-899 (FKKL…EAFA). The segment covering 286 to 310 (AKAEHNLKVASEEKQERLQRSENKQ) has biased composition (basic and acidic residues).

This Homo sapiens (Human) protein is Ankyrin repeat domain-containing protein 18A (ANKRD18A).